Consider the following 1141-residue polypeptide: DNA polymerase II large subunit (1141 aa).

The disordered stretch occupies residues 567 to 587; that stretch reads AGTRVGGRMGRPGKSAPRKMK.

Belongs to the archaeal DNA polymerase II family. As to quaternary structure, heterodimer of a large subunit and a small subunit.

It carries out the reaction DNA(n) + a 2'-deoxyribonucleoside 5'-triphosphate = DNA(n+1) + diphosphate. The catalysed reaction is Exonucleolytic cleavage in the 3'- to 5'-direction to yield nucleoside 5'-phosphates.. Possesses two activities: a DNA synthesis (polymerase) and an exonucleolytic activity that degrades single-stranded DNA in the 3'- to 5'-direction. Has a template-primer preference which is characteristic of a replicative DNA polymerase. The chain is DNA polymerase II large subunit from Methanocorpusculum labreanum (strain ATCC 43576 / DSM 4855 / Z).